The chain runs to 145 residues: Superoxide dismutase [Cu-Zn] (145 aa).

Residues histidine 37, histidine 39, and histidine 54 each coordinate Cu cation. Residues cysteine 48 and cysteine 137 are joined by a disulfide bond. The Zn(2+) site is built by histidine 54, histidine 62, histidine 71, and aspartate 74. Histidine 111 is a Cu cation binding site.

It belongs to the Cu-Zn superoxide dismutase family. Homodimer. Cu cation is required as a cofactor. The cofactor is Zn(2+).

It localises to the cytoplasm. The catalysed reaction is 2 superoxide + 2 H(+) = H2O2 + O2. Destroys radicals which are normally produced within the cells and which are toxic to biological systems. This chain is Superoxide dismutase [Cu-Zn], found in Drosophila busckii (Fruit fly).